The sequence spans 251 residues: uncharacterized protein (251 aa).

To M.jannaschii MJ0638 and MJ1123 and M.tuberculosis Rv2003c.

This is an uncharacterized protein from Methanocaldococcus jannaschii (strain ATCC 43067 / DSM 2661 / JAL-1 / JCM 10045 / NBRC 100440) (Methanococcus jannaschii).